Consider the following 361-residue polypeptide: SUN domain-containing protein 3 (361 aa).

Residues 1-47 are Nuclear-facing; sequence MSGKAKARRAAMFFRGCSEDASGSTSGSTLLSEDENPDTNGVTRSWK. Residues 19 to 38 form a disordered region; sequence EDASGSTSGSTLLSEDENPD. Positions 22 to 31 are enriched in low complexity; that stretch reads SGSTSGSTLL. The helical transmembrane segment at 48-69 threads the bilayer; that stretch reads IILSTMFTLTFLLVGLLSHQWL. Topologically, residues 70–361 are perinuclear space; it reads KETEVPQKSR…RVHGTPGKHI (292 aa). Positions 103–129 form a coiled coil; it reads KEQLELLKKESQTLENNFHKILLLIEQ. An SUN domain is found at 197–358; it reads GASIIEAGTS…YRFRVHGTPG (162 aa).

As to quaternary structure, self-associates. Interacts with SYNE1 and SPAG4/SUN4. Proposed to form a spermatogenesis-specific LINC complex with SYNE1 during sperm head formation possibly implicating a SUN domain-based heterotrimer with SPAG4/SUN4 associating with SYNE1.

It localises to the membrane. The protein resides in the nucleus envelope. Its subcellular location is the nucleus inner membrane. Functionally, as a probable component of the LINC (LInker of Nucleoskeleton and Cytoskeleton) complex, involved in the connection between the nuclear lamina and the cytoskeleton. The nucleocytoplasmic interactions established by the LINC complex play an important role in the transmission of mechanical forces across the nuclear envelope and in nuclear movement and positioning. May be involved in nuclear remodeling during sperm head formation in spermatogenesis. A probable SUN3:SYNE1 LINC complex may tether spermatid nuclei to posterior cytoskeletal structures such as the manchette. In Macaca fascicularis (Crab-eating macaque), this protein is SUN domain-containing protein 3 (SUN3).